The primary structure comprises 211 residues: Protein-methionine-sulfoxide reductase heme-binding subunit MsrQ (211 aa).

Helical transmembrane passes span 10-30 (WLKV…VWAI), 82-102 (LWCF…ELGV), 116-136 (PYLT…FTST), 153-173 (FVYL…KIIS), and 178-198 (IYAG…LSLF).

Belongs to the MsrQ family. As to quaternary structure, heterodimer of a catalytic subunit (MsrP) and a heme-binding subunit (MsrQ). The cofactor is FMN. It depends on heme b as a cofactor.

Its subcellular location is the cell inner membrane. Its function is as follows. Part of the MsrPQ system that repairs oxidized periplasmic proteins containing methionine sulfoxide residues (Met-O), using respiratory chain electrons. Thus protects these proteins from oxidative-stress damage caused by reactive species of oxygen and chlorine generated by the host defense mechanisms. MsrPQ is essential for the maintenance of envelope integrity under bleach stress, rescuing a wide series of structurally unrelated periplasmic proteins from methionine oxidation, including the primary periplasmic chaperone SurA and the lipoprotein Pal. MsrQ provides electrons for reduction to the reductase catalytic subunit MsrP, using the quinone pool of the respiratory chain. This chain is Protein-methionine-sulfoxide reductase heme-binding subunit MsrQ, found in Escherichia coli (strain 55989 / EAEC).